A 642-amino-acid polypeptide reads, in one-letter code: Threonine--tRNA ligase (642 aa).

Residues Met-1–Thr-61 enclose the TGS domain. The tract at residues Asp-243 to Pro-534 is catalytic. At Lys-286 the chain carries N6-acetyllysine. Zn(2+)-binding residues include Cys-334, His-385, and His-511.

This sequence belongs to the class-II aminoacyl-tRNA synthetase family. Homodimer. Zn(2+) serves as cofactor.

The protein localises to the cytoplasm. The catalysed reaction is tRNA(Thr) + L-threonine + ATP = L-threonyl-tRNA(Thr) + AMP + diphosphate + H(+). Functionally, catalyzes the attachment of threonine to tRNA(Thr) in a two-step reaction: L-threonine is first activated by ATP to form Thr-AMP and then transferred to the acceptor end of tRNA(Thr). Also edits incorrectly charged L-seryl-tRNA(Thr). This Escherichia fergusonii (strain ATCC 35469 / DSM 13698 / CCUG 18766 / IAM 14443 / JCM 21226 / LMG 7866 / NBRC 102419 / NCTC 12128 / CDC 0568-73) protein is Threonine--tRNA ligase.